A 252-amino-acid chain; its full sequence is MLAKRIIAALDIRAGRVVKGIKFRNIRDAGDPVELARRYESEGIDEIVFLDITASHEKRGILLDLVERVAEEIYVPFTVGGGIKSAEEAGEIIKRGADKVFVNTAAVERPELVGEIAELVGSANLVVAIDAKWNGSFWEVYTHGGRKPRGIDAVEWARKVEELGAGEILLTSMDTDGTKEGFDIPLTRAVANAVDIPVIASGGAGRPEHFYEAFKAGAEAALAASIFHYGEYTVGQLKGFLAERGIPVRLDY.

Catalysis depends on residues D11 and D130.

The protein belongs to the HisA/HisF family. Heterodimer of HisH and HisF.

The protein resides in the cytoplasm. The catalysed reaction is 5-[(5-phospho-1-deoxy-D-ribulos-1-ylimino)methylamino]-1-(5-phospho-beta-D-ribosyl)imidazole-4-carboxamide + L-glutamine = D-erythro-1-(imidazol-4-yl)glycerol 3-phosphate + 5-amino-1-(5-phospho-beta-D-ribosyl)imidazole-4-carboxamide + L-glutamate + H(+). The protein operates within amino-acid biosynthesis; L-histidine biosynthesis; L-histidine from 5-phospho-alpha-D-ribose 1-diphosphate: step 5/9. Functionally, IGPS catalyzes the conversion of PRFAR and glutamine to IGP, AICAR and glutamate. The HisF subunit catalyzes the cyclization activity that produces IGP and AICAR from PRFAR using the ammonia provided by the HisH subunit. This is Imidazole glycerol phosphate synthase subunit HisF from Thermococcus kodakarensis (strain ATCC BAA-918 / JCM 12380 / KOD1) (Pyrococcus kodakaraensis (strain KOD1)).